Here is a 518-residue protein sequence, read N- to C-terminus: Protein translocase subunit SecD (518 aa).

6 helical membrane-spanning segments follow: residues 9–29 (IFLS…NFMQ), 361–381 (LIGF…LGLF), 384–404 (IALS…QATL), 406–426 (LPGI…NVLI), 452–474 (FATI…IFGV), and 486–506 (IGII…IDIW).

It belongs to the SecD/SecF family. SecD subfamily. In terms of assembly, forms a complex with SecF. Part of the essential Sec protein translocation apparatus which comprises SecA, SecYEG and auxiliary proteins SecDF-YajC and YidC.

The protein resides in the cell inner membrane. Part of the Sec protein translocase complex. Interacts with the SecYEG preprotein conducting channel. SecDF uses the proton motive force (PMF) to complete protein translocation after the ATP-dependent function of SecA. The protein is Protein translocase subunit SecD of Rickettsia conorii (strain ATCC VR-613 / Malish 7).